A 525-amino-acid chain; its full sequence is UPF0288 protein MM_0912 (525 aa).

It belongs to the UPF0288 family.

The chain is UPF0288 protein MM_0912 from Methanosarcina mazei (strain ATCC BAA-159 / DSM 3647 / Goe1 / Go1 / JCM 11833 / OCM 88) (Methanosarcina frisia).